The primary structure comprises 233 residues: Fibroblast growth factor 8 (233 aa).

A signal peptide spans 1-22; it reads MGSPRSALSCLLLHLLVLCLQA. Asn-155 carries N-linked (GlcNAc...) asparagine glycosylation.

This sequence belongs to the heparin-binding growth factors family. In terms of assembly, monomer. Homodimer. Interacts with FGFR1, FGFR2, FGFR3 and FGFR4. Affinity between fibroblast growth factors (FGFs) and their receptors is increased by heparan sulfate glycosaminoglycans that function as coreceptors.

The protein resides in the secreted. Plays an important role in the regulation of embryonic development, cell proliferation, cell differentiation and cell migration. Required for normal brain, eye, ear and limb development during embryogenesis. Required for normal development of the gonadotropin-releasing hormone (GnRH) neuronal system. Plays a role in neurite outgrowth in hippocampal cells. The protein is Fibroblast growth factor 8 (FGF8) of Homo sapiens (Human).